The primary structure comprises 226 residues: N-(5'-phosphoribosyl)anthranilate isomerase (226 aa).

This sequence belongs to the TrpF family.

It carries out the reaction N-(5-phospho-beta-D-ribosyl)anthranilate = 1-(2-carboxyphenylamino)-1-deoxy-D-ribulose 5-phosphate. It functions in the pathway amino-acid biosynthesis; L-tryptophan biosynthesis; L-tryptophan from chorismate: step 3/5. The sequence is that of N-(5'-phosphoribosyl)anthranilate isomerase (TRP1) from Candida albicans (strain SC5314 / ATCC MYA-2876) (Yeast).